Here is a 341-residue protein sequence, read N- to C-terminus: Fe-S cluster assembly protein DRE2 (341 aa).

Positions Met1 to Leu157 are N-terminal SAM-like domain. The segment at Leu151–Leu171 is disordered. The tract at residues Leu157 to Ala204 is linker. Residues Ser161–Gln170 are compositionally biased toward acidic residues. [2Fe-2S] cluster-binding residues include Cys215, Cys227, Cys230, and Cys232. The fe-S binding site A stretch occupies residues Cys215–Cys232. The [4Fe-4S] cluster site is built by Cys304, Cys307, Cys315, and Cys318. 2 consecutive short sequence motifs (cx2C motif) follow at residues Cys304–Cys307 and Cys315–Cys318. Residues Cys304 to Cys318 are fe-S binding site B.

It belongs to the anamorsin family. Monomer. Interacts with TAH18. Interacts with MIA40. [2Fe-2S] cluster is required as a cofactor. [4Fe-4S] cluster serves as cofactor.

Its subcellular location is the cytoplasm. It is found in the mitochondrion intermembrane space. In terms of biological role, component of the cytosolic iron-sulfur (Fe-S) protein assembly (CIA) machinery required for the maturation of extramitochondrial Fe-S proteins. Part of an electron transfer chain functioning in an early step of cytosolic Fe-S biogenesis, facilitating the de novo assembly of a [4Fe-4S] cluster on the scaffold complex CFD1-NBP35. Electrons are transferred to DRE2 from NADPH via the FAD- and FMN-containing protein TAH18. TAH18-DRE2 are also required for the assembly of the diferric tyrosyl radical cofactor of ribonucleotide reductase (RNR), probably by providing electrons for reduction during radical cofactor maturation in the catalytic small subunit RNR2. This is Fe-S cluster assembly protein DRE2 from Komagataella phaffii (strain GS115 / ATCC 20864) (Yeast).